The following is a 353-amino-acid chain: Photosystem II D2 protein (353 aa).

Residue Thr2 is modified to N-acetylthreonine. Phosphothreonine is present on Thr2. The helical transmembrane segment at 41-61 (CAYFALGGWFTGTTFVTSWYT) threads the bilayer. A chlorophyll a-binding site is contributed by His118. The chain crosses the membrane as a helical span at residues 125–141 (GFMLRQFELARSVQLRP). The pheophytin a site is built by Gln130 and Asn143. Residues 153–166 (VFVSVFLIYPLGQS) form a helical membrane-spanning segment. His198 lines the chlorophyll a pocket. A helical membrane pass occupies residues 208-228 (AALLCAIHGATVENTLFEDGD). 2 residues coordinate a plastoquinone: His215 and Phe262. His215 contributes to the Fe cation binding site. His269 lines the Fe cation pocket. A helical membrane pass occupies residues 279–295 (GLWMSALGVVGLALNLR).

It belongs to the reaction center PufL/M/PsbA/D family. PSII is composed of 1 copy each of membrane proteins PsbA, PsbB, PsbC, PsbD, PsbE, PsbF, PsbH, PsbI, PsbJ, PsbK, PsbL, PsbM, PsbT, PsbX, PsbY, PsbZ, Psb30/Ycf12, at least 3 peripheral proteins of the oxygen-evolving complex and a large number of cofactors. It forms dimeric complexes. Requires The D1/D2 heterodimer binds P680, chlorophylls that are the primary electron donor of PSII, and subsequent electron acceptors. It shares a non-heme iron and each subunit binds pheophytin, quinone, additional chlorophylls, carotenoids and lipids. There is also a Cl(-1) ion associated with D1 and D2, which is required for oxygen evolution. The PSII complex binds additional chlorophylls, carotenoids and specific lipids. as cofactor.

The protein resides in the plastid. It is found in the chloroplast thylakoid membrane. It catalyses the reaction 2 a plastoquinone + 4 hnu + 2 H2O = 2 a plastoquinol + O2. In terms of biological role, photosystem II (PSII) is a light-driven water:plastoquinone oxidoreductase that uses light energy to abstract electrons from H(2)O, generating O(2) and a proton gradient subsequently used for ATP formation. It consists of a core antenna complex that captures photons, and an electron transfer chain that converts photonic excitation into a charge separation. The D1/D2 (PsbA/PsbD) reaction center heterodimer binds P680, the primary electron donor of PSII as well as several subsequent electron acceptors. D2 is needed for assembly of a stable PSII complex. The sequence is that of Photosystem II D2 protein from Nuphar advena (Common spatterdock).